An 83-amino-acid chain; its full sequence is uncharacterized protein (83 aa).

The interval 57-83 (ESVEEEEEFEDYDEFEEEEEYYYDDEY) is disordered.

This is an uncharacterized protein from Archaeoglobus fulgidus (strain ATCC 49558 / DSM 4304 / JCM 9628 / NBRC 100126 / VC-16).